The sequence spans 192 residues: dTTP/UTP pyrophosphatase (192 aa).

Asp65 acts as the Proton acceptor in catalysis.

It belongs to the Maf family. YhdE subfamily. It depends on a divalent metal cation as a cofactor.

Its subcellular location is the cytoplasm. The enzyme catalyses dTTP + H2O = dTMP + diphosphate + H(+). It carries out the reaction UTP + H2O = UMP + diphosphate + H(+). Nucleoside triphosphate pyrophosphatase that hydrolyzes dTTP and UTP. May have a dual role in cell division arrest and in preventing the incorporation of modified nucleotides into cellular nucleic acids. This is dTTP/UTP pyrophosphatase from Fusobacterium nucleatum subsp. nucleatum (strain ATCC 25586 / DSM 15643 / BCRC 10681 / CIP 101130 / JCM 8532 / KCTC 2640 / LMG 13131 / VPI 4355).